The sequence spans 231 residues: Ion-translocating oxidoreductase complex subunit E (231 aa).

Helical transmembrane passes span 18 to 38, 39 to 59, 63 to 83, 86 to 106, 125 to 145, and 182 to 202; these read ALVQ…ATNA, LGLG…ISTL, TPSE…VSAV, LINA…PLIV, ALSA…MFVL, and PFLL…MLAG.

The protein belongs to the NqrDE/RnfAE family. The complex is composed of six subunits: RsxA, RsxB, RsxC, RsxD, RsxE and RsxG.

Its subcellular location is the cell inner membrane. Functionally, part of a membrane-bound complex that couples electron transfer with translocation of ions across the membrane. Required to maintain the reduced state of SoxR. The sequence is that of Ion-translocating oxidoreductase complex subunit E from Escherichia coli O6:K15:H31 (strain 536 / UPEC).